Consider the following 269-residue polypeptide: Ribosomal RNA small subunit methyltransferase A (269 aa).

6 residues coordinate S-adenosyl-L-methionine: asparagine 20, leucine 22, glycine 47, glutamate 68, aspartate 90, and asparagine 110.

The protein belongs to the class I-like SAM-binding methyltransferase superfamily. rRNA adenine N(6)-methyltransferase family. RsmA subfamily.

The protein resides in the cytoplasm. It catalyses the reaction adenosine(1518)/adenosine(1519) in 16S rRNA + 4 S-adenosyl-L-methionine = N(6)-dimethyladenosine(1518)/N(6)-dimethyladenosine(1519) in 16S rRNA + 4 S-adenosyl-L-homocysteine + 4 H(+). In terms of biological role, specifically dimethylates two adjacent adenosines (A1518 and A1519) in the loop of a conserved hairpin near the 3'-end of 16S rRNA in the 30S particle. May play a critical role in biogenesis of 30S subunits. In Chlorobium phaeobacteroides (strain DSM 266 / SMG 266 / 2430), this protein is Ribosomal RNA small subunit methyltransferase A.